The primary structure comprises 102 residues: NADH-quinone oxidoreductase subunit K 2 (102 aa).

A run of 3 helical transmembrane segments spans residues 4–24 (ITPV…TVGV), 30–50 (IVII…NLIA), and 62–82 (IFAI…LGIL).

It belongs to the complex I subunit 4L family. NDH-1 is composed of 14 different subunits. Subunits NuoA, H, J, K, L, M, N constitute the membrane sector of the complex.

It is found in the cell inner membrane. The enzyme catalyses a quinone + NADH + 5 H(+)(in) = a quinol + NAD(+) + 4 H(+)(out). Functionally, NDH-1 shuttles electrons from NADH, via FMN and iron-sulfur (Fe-S) centers, to quinones in the respiratory chain. The immediate electron acceptor for the enzyme in this species is believed to be ubiquinone. Couples the redox reaction to proton translocation (for every two electrons transferred, four hydrogen ions are translocated across the cytoplasmic membrane), and thus conserves the redox energy in a proton gradient. This Solibacter usitatus (strain Ellin6076) protein is NADH-quinone oxidoreductase subunit K 2.